A 270-amino-acid chain; its full sequence is Flagellar hook-basal body complex protein FlhO (270 aa).

This sequence belongs to the flagella basal body rod proteins family.

Functionally, not required for motility. The protein is Flagellar hook-basal body complex protein FlhO (flhO) of Bacillus subtilis (strain 168).